The following is a 255-amino-acid chain: MTFLALDVGNTRLKWAQYEAPAVGARLLAHGAVFLENIDRLAEEEWSEMSPPTRILGCIVAGDAIKRRVTEQMELWDVVPRWVVSSPQEAGLTNGYEHPARLGADRWVAMIGARHRLLARGISKPCIVVMVGTAVTVEAIDASGKFLGGIILPGHGIMLRALESGTAGLHVPTGEVRDFPTNTSDALTSGGTFAIAGAVQRMVENITRHCGEPPECIMTGGAGWKMAPSMSVKYELVDSLIFDGLLEIASRRFAP.

Residue aspartate 7 to lysine 14 coordinates ATP. Residues tyrosine 96 and glycine 103–arginine 106 contribute to the substrate site. Catalysis depends on aspartate 105, which acts as the Proton acceptor. Threonine 133 contacts ATP. Threonine 183 is a binding site for substrate.

The protein belongs to the type III pantothenate kinase family. Homodimer. The cofactor is NH4(+). It depends on K(+) as a cofactor.

The protein resides in the cytoplasm. The enzyme catalyses (R)-pantothenate + ATP = (R)-4'-phosphopantothenate + ADP + H(+). The protein operates within cofactor biosynthesis; coenzyme A biosynthesis; CoA from (R)-pantothenate: step 1/5. Functionally, catalyzes the phosphorylation of pantothenate (Pan), the first step in CoA biosynthesis. This is Type III pantothenate kinase from Polaromonas sp. (strain JS666 / ATCC BAA-500).